The following is a 674-amino-acid chain: Polyunsaturated fatty acid 5-lipoxygenase (674 aa).

A PLAT domain is found at 2–118 (PSYTVTVATG…EVVLRDGRAK (117 aa)). Residues G17, T18, D19, N44, D45, E47, D79, and D80 each coordinate Ca(2+). One can recognise a Lipoxygenase domain in the interval 119–674 (LARDDQIHIL…PDRIPNSVAI (556 aa)). A Phosphoserine; by MAPKAPK2 modification is found at S272. Fe cation contacts are provided by H368 and H373. S524 is subject to Phosphoserine; by PKA. Fe cation is bound by residues H551, N555, and I674.

This sequence belongs to the lipoxygenase family. As to quaternary structure, homodimer. Interacts with ALOX5AP and LTC4S. Interacts with COTL1, the interaction is required for stability and efficient catalytic activity. Interacts with PIK3R1; this interaction bridges ALOX5 with CD40 after CD40 ligation in B cells and leads to the production of reactive oxygen species (ROS). Interacts (via PLAT domain) with DICER1 (via Dicer dsRNA-binding fold domain); this interaction enhances arachidonate 5-lipoxygenase activity and modifies the miRNA precursor processing activity of DICER1. The cofactor is Fe cation. Serine phosphorylation by MAPKAPK2 is stimulated by arachidonic acid. Phosphorylation on Ser-524 by PKA has an inhibitory effect. Phosphorylation on Ser-272 prevents export from the nucleus. Phosphorylation at Ser-524 is stimulated by 8-bromo-3',5'-cyclic AMP or prostaglandin E2.

The protein localises to the cytoplasm. It is found in the nucleus matrix. Its subcellular location is the nucleus membrane. It localises to the perinuclear region. The protein resides in the cytosol. The protein localises to the nucleus envelope. It is found in the nucleus intermembrane space. The enzyme catalyses (5Z,8Z,11Z,14Z)-eicosatetraenoate + O2 = leukotriene A4 + H2O. It catalyses the reaction 18-HEPE + O2 = (5S)-hydroperoxy-18-hydroxy-(7E,9E,11Z,14Z,16E)-eicosapentaenoate. It carries out the reaction (18R)-hydroxy-(5Z,8Z,11Z,14Z,16E)-eicosapentaenoate + O2 = (5S)-hydroperoxy-(18R)-hydroxy-(6E,8Z,11Z,14Z,16E)-eicosapentaenoate. The catalysed reaction is (18S)-hydroxy-(5Z,8Z,11Z,14Z,16E)-eicosapentaenoate + O2 = (5S)-hydroperoxy-(18S)-hydroxy-(6E,8Z,11Z,14Z,16E)-eicosapentaenoate. The enzyme catalyses (5S)-hydroperoxy-(18S)-hydroxy-(6E,8Z,11Z,14Z,16E)-eicosapentaenoate = (5S,6S)-epoxy-(18S)-hydroxy-(7E,9E,11Z,14Z,16E)-eicosapentaenoate + H2O. It catalyses the reaction (5S)-hydroperoxy-(18R)-hydroxy-(6E,8Z,11Z,14Z,16E)-eicosapentaenoate = (5S,6S)-epoxy-(18R)-hydroxy-(7E,9E,11Z,14Z,16E)-eicosapentaenoate + H2O. It carries out the reaction (5S)-hydroperoxy-18-hydroxy-(7E,9E,11Z,14Z,16E)-eicosapentaenoate = (5S,6S)-epoxy-18-hydroxy-(7E,9E,11Z,14Z,16E)-eicosapentaenoate + H2O. The catalysed reaction is (5Z,8Z,11Z,14Z)-eicosatetraenoate + O2 = (5S)-hydroperoxy-(6E,8Z,11Z,14Z)-eicosatetraenoate. The enzyme catalyses (15S)-hydroxy-(5Z,8Z,11Z,13E)-eicosatetraenoate + O2 = (5S)-hydroperoxy-(15S)-hydroxy-(6E,8Z,11Z,13E)-eicosatetraenoate. It catalyses the reaction (5S)-hydroperoxy-(6E,8Z,11Z,14Z)-eicosatetraenoate = leukotriene A4 + H2O. It carries out the reaction (5Z,8Z,11Z,14Z)-eicosatetraenoate + O2 = (8S)-hydroperoxy-(5Z,9E,11Z,14Z)-eicosatetraenoate. The catalysed reaction is (5Z,8Z,11Z,14Z)-eicosatetraenoate + O2 = (12S)-hydroperoxy-(5Z,8Z,10E,14Z)-eicosatetraenoate. The enzyme catalyses (5Z,8Z)-eicosadienoate + O2 = (5S)-hydroperoxy-(6E,8Z)-eicosadienoate. It catalyses the reaction (12S)-hydroxy-(5Z,8Z,10E,14Z)-eicosatetraenoate + O2 = (5S)-hydroperoxy-(12S)-hydroxy-(6E,8Z,10E,14Z)-eicosatetraenoate. It carries out the reaction (5Z,8Z,11Z,14Z,17Z)-eicosapentaenoate + O2 = 5-hydroperoxy-(6E,8Z,11Z,14Z,17Z)-eicosapentaenoate. The catalysed reaction is (4Z,7Z,10Z,13Z,16Z,19Z)-docosahexaenoate + O2 = (14S)-hydroperoxy-(4Z,7Z,10Z,12E,16Z,19Z)-docosahexaenoate. The enzyme catalyses (4Z,7Z,10Z,13Z,16Z,19Z)-docosahexaenoate + O2 = (7S)-hydroperoxy-(4Z,8E,10Z,13Z,16Z,19Z)-docosahexaenoate. It catalyses the reaction (4Z,7Z,10Z,13Z,16Z,19Z)-docosahexaenoate + O2 = (17S)-hydroperoxy-(4Z,7Z,10Z,13Z,15E,19Z)-docosahexaenoate. It functions in the pathway lipid metabolism; leukotriene A4 biosynthesis. With respect to regulation, undergoes a sequential loss of the oxygenase and pseudoperoxidase activities which is dependent on the structural characteristics of the substrate for the reaction, on oxygen concentration and on exposure to phospholipids and calcium. 15-HETE and other 15-mono-hydroxyeicosanoids exhibit the highest inhibitory potencies in their capability of suppressing 5-lipoxygenation of arachidonic acid, whereas the other HETEs, (5S,15S)-dihydroxy-(6E,8Z,11Z,13E)-eicosatetraenoic acid (5,15-diHETE) as well as octadecanoids, are modest or poor inhibitors. The formation of (5S)-hydroperoxy-(15S)-hydroxy-(6E,8Z,11Z,13E)-eicosatetraenoate is strongly stimulated by either hydroperoxypolyenoic fatty acids or arachidonic acid. Arachidonate 5-lipoxygenase and leukotriene A4 synthase activities are allosterically increased by ATP. In terms of biological role, catalyzes the oxygenation of arachidonate ((5Z,8Z,11Z,14Z)-eicosatetraenoate) to 5-hydroperoxyeicosatetraenoate (5-HPETE) followed by the dehydration to 5,6- epoxyeicosatetraenoate (Leukotriene A4/LTA4), the first two steps in the biosynthesis of leukotrienes, which are potent mediators of inflammation. Also catalyzes the oxygenation of arachidonate into 8-hydroperoxyicosatetraenoate (8-HPETE) and 12-hydroperoxyicosatetraenoate (12-HPETE). Displays lipoxin synthase activity being able to convert (15S)-HETE into a conjugate tetraene. Although arachidonate is the preferred substrate, this enzyme can also metabolize oxidized fatty acids derived from arachidonate such as (15S)-HETE, eicosapentaenoate (EPA) such as (18R)- and (18S)-HEPE or docosahexaenoate (DHA) which lead to the formation of specialized pro-resolving mediators (SPM) lipoxin and resolvins E and D respectively, therefore it participates in anti-inflammatory responses. Oxidation of DHA directly inhibits endothelial cell proliferation and sprouting angiogenesis via peroxisome proliferator-activated receptor gamma (PPARgamma). It does not catalyze the oxygenation of linoleic acid and does not convert (5S)-HETE to lipoxin isomers. In addition to inflammatory processes, it participates in dendritic cell migration, wound healing through an antioxidant mechanism based on heme oxygenase-1 (HO-1) regulation expression, monocyte adhesion to the endothelium via ITGAM expression on monocytes. Moreover, it helps establish an adaptive humoral immunity by regulating primary resting B cells and follicular helper T cells and participates in the CD40-induced production of reactive oxygen species (ROS) after CD40 ligation in B cells through interaction with PIK3R1 that bridges ALOX5 with CD40. May also play a role in glucose homeostasis, regulation of insulin secretion and palmitic acid-induced insulin resistance via AMPK. Can regulate bone mineralization and fat cell differentiation increases in induced pluripotent stem cells. This Homo sapiens (Human) protein is Polyunsaturated fatty acid 5-lipoxygenase.